A 162-amino-acid polypeptide reads, in one-letter code: Disulfide bond formation protein B (162 aa).

Over 1 to 4 (MRII) the chain is Cytoplasmic. The chain crosses the membrane as a helical span at residues 5-21 (FLLIFLACAGLIGYALY). Residues 22–39 (LQLMDGLLPCPLCIFQRI) are Periplasmic-facing. C31 and C34 form a disulfide bridge. A helical transmembrane segment spans residues 40-56 (AYWLIGITALFTFIHNP). Topologically, residues 57–62 (QSLGQH) are cytoplasmic. A helical membrane pass occupies residues 63-80 (IYYGLIILFSLAGAIVAG). Residues 81 to 136 (RQAWLIRFPEAFECGISPEEAFLNGLPLAQWWPNMFEANGDCNDGTWQFLSLTLPD) are Periplasmic-facing. The cysteines at positions 94 and 122 are disulfide-linked. Residues 137 to 155 (WSLLIFAAFGIIAGLLWHK) form a helical membrane-spanning segment. Residues 156–162 (KYNSINQ) are Cytoplasmic-facing.

The protein belongs to the DsbB family.

It is found in the cell inner membrane. In terms of biological role, required for disulfide bond formation in some periplasmic proteins. Acts by oxidizing the DsbA protein. This is Disulfide bond formation protein B from Nitrosomonas eutropha (strain DSM 101675 / C91 / Nm57).